An 83-amino-acid chain; its full sequence is MKTLLLTLLVVTIVCLDLGYTLECHNQQSSETPTTTGCSGGETNCYKKRWRDHRGYRIERGCGCPSVKKGIEINCCTTDRCNN.

Residues 1-21 (MKTLLLTLLVVTIVCLDLGYT) form the signal peptide. Disulfide bonds link cysteine 24–cysteine 45, cysteine 38–cysteine 62, cysteine 64–cysteine 75, and cysteine 76–cysteine 81.

This sequence belongs to the three-finger toxin family. Short-chain subfamily. Type I alpha-neurotoxin sub-subfamily. As to expression, expressed by the venom gland.

Its subcellular location is the secreted. In terms of biological role, binds to muscle nicotinic acetylcholine receptor (nAChR) and inhibit acetylcholine from binding to the receptor, thereby impairing neuromuscular transmission. This is Alpha-neurotoxin NTX-3 from Naja sputatrix (Malayan spitting cobra).